A 303-amino-acid polypeptide reads, in one-letter code: MAHYHDNYGKNDEVEFVRTGYGKDMVKVLHIQRDGKYHSIKEVATSVQLTLRSKKDYLHGDNSDIIPTDTIKNTVHVLAKLRGIRNIETFAMNICEHFLSSFNHVTRAHVYVEEVPWKRFEKNGIKHVHAFIHTPTGTHFCEVEQMRNGPPVIHSGIKDLKVLKTTQSGFEGFLKDQFTTLPEVKDRCFATQVYCKWRYQRRDVDFEAIWGAVRDIVLQKFAGPYDKGEYSPSVQKTLYDIQVLSLSQLPEIEDMEISLPNIHYFNIDMSKMGLINKEEVLLPLDNPYGKITGTVKRKLPSRL.

Position 2 is an N-acetylalanine (A2). An N6-acetyllysine; alternate mark is found at K10 and K23. K10 and K23 each carry N6-succinyllysine; alternate. Residue K23 is the Charge relay system of the active site. Residues K27 and K36 each carry the N6-acetyllysine modification. 2 positions are modified to phosphoserine: S39 and S63. The active-site Charge relay system is T68. 2 residues coordinate urate: T68 and D69. N6-acetyllysine is present on residues K118, K122, and K164. F170 provides a ligand contact to urate. Residues K175 and K185 each carry the N6-acetyllysine modification. R187 lines the urate pocket. N6-acetyllysine; alternate is present on residues K220 and K227. 2 positions are modified to N6-succinyllysine; alternate: K220 and K227. S231 bears the Phosphoserine mark. Urate is bound by residues V234, Q235, and N261. The active-site Charge relay system is H263. An N6-acetyllysine modification is found at K277. Position 288 is a phosphotyrosine (Y288). Positions 301–303 (SRL) match the Microbody targeting signal motif.

Belongs to the uricase family. Acetylation of Lys-118, Lys-164 and Lys-290 is observed in liver mitochondria from fasted mice but not from fed mice. May be deacetylated by Sirt5; however it is unclear whether Sirt5 mediates deacetylation or desuccinylation of Uox; additional evidence is required to validate these results.

It localises to the peroxisome. The protein resides in the mitochondrion. It carries out the reaction urate + O2 + H2O = 5-hydroxyisourate + H2O2. Its pathway is purine metabolism; urate degradation; (S)-allantoin from urate: step 1/3. In terms of biological role, catalyzes the oxidation of uric acid to 5-hydroxyisourate, which is further processed to form (S)-allantoin. This chain is Uricase (Uox), found in Mus musculus (Mouse).